Here is a 178-residue protein sequence, read N- to C-terminus: MEQFHGTTILSVRRGNIVALGGDGQVTLGNIVMKGTARKVRKVYNGKVLVGFAGGTADAFTLLERFESKLEKHQGHLMRASVELAKDWRTDRMLRRLEAMLLVADKETTLIITGNGDVLEPNDGIGAIGSGGTYAQSAAKALQENTDLSPEDIVKKSLTIAGELCIYTNLSHIIETLD.

The active site involves Thr-7. The Na(+) site is built by Gly-162, Cys-165, and Thr-168.

It belongs to the peptidase T1B family. HslV subfamily. As to quaternary structure, a double ring-shaped homohexamer of HslV is capped on each side by a ring-shaped HslU homohexamer. The assembly of the HslU/HslV complex is dependent on binding of ATP.

The protein localises to the cytoplasm. The catalysed reaction is ATP-dependent cleavage of peptide bonds with broad specificity.. With respect to regulation, allosterically activated by HslU binding. Functionally, protease subunit of a proteasome-like degradation complex believed to be a general protein degrading machinery. In Janthinobacterium sp. (strain Marseille) (Minibacterium massiliensis), this protein is ATP-dependent protease subunit HslV.